The sequence spans 342 residues: MAKKRDVWITEVALRDGSHAVAHQYTVEQVVKIAKALDEANVPYIEVAHGDGLAGSSLQYGLSRTNELELIEAAVSVCKQSKIAVLLLPGIGTMKDLQQVAGLGAKMARIATHVTEADVSAQHIGLAKELGMETVGFLMMAHMAPVEKLVEQAKLMESYGADAVYVVDSAGALLPHEVRDRIRALKQHVGVEIGFHGHNNLSLAMANSLVAIEEGATRIDGSVRCLGAGAGNTQTEVLVAVLDRLGVKTGIDLYKMMDLAEEIVAPMLPAPQEITRDSLVLGYAGVYSSFLLHARRIAEKLGMDARDILVELGKRKVVGGQEDMIVDVAVEMAKKRAESLVQ.

The 251-residue stretch at 7–257 (VWITEVALRD…KTGIDLYKMM (251 aa)) folds into the Pyruvate carboxyltransferase domain. 15-16 (RD) is a binding site for substrate. Asp-16 lines the Mn(2+) pocket. Residue His-19 is the Proton acceptor of the active site. The substrate site is built by Ser-169 and His-196. Residues His-196 and His-198 each coordinate Mn(2+). Residue Tyr-287 participates in substrate binding.

This sequence belongs to the 4-hydroxy-2-oxovalerate aldolase family.

It carries out the reaction (S)-4-hydroxy-2-oxopentanoate = acetaldehyde + pyruvate. This Geobacillus stearothermophilus (Bacillus stearothermophilus) protein is 4-hydroxy-2-oxovalerate aldolase (pheE).